The chain runs to 139 residues: Protein cornichon homolog 4 (139 aa).

Transmembrane regions (helical) follow at residues 5–25, 57–77, and 118–138; these read VFVF…YFII, IVTV…NLPV, and LGFH…ALIN.

It belongs to the cornichon family. In terms of assembly, interacts with Sec23/24 complex components SEC24B and SEC24D. Interacts with CCR5. Interacts with ADRB2 in the early secretory pathway.

Its subcellular location is the membrane. It localises to the endoplasmic reticulum. The protein resides in the endoplasmic reticulum-Golgi intermediate compartment. In terms of biological role, involved in G protein-coupled receptors (GPCRs) trafficking from the endoplasmic reticulum to the cell surface; it promotes the exit of GPCRs from the early secretory pathway, likely through interaction with the COPII machinery. In Homo sapiens (Human), this protein is Protein cornichon homolog 4 (CNIH4).